The primary structure comprises 292 residues: GTP cyclohydrolase FolE2 (292 aa).

This sequence belongs to the GTP cyclohydrolase IV family.

The enzyme catalyses GTP + H2O = 7,8-dihydroneopterin 3'-triphosphate + formate + H(+). It participates in cofactor biosynthesis; 7,8-dihydroneopterin triphosphate biosynthesis; 7,8-dihydroneopterin triphosphate from GTP: step 1/1. Functionally, converts GTP to 7,8-dihydroneopterin triphosphate. The polypeptide is GTP cyclohydrolase FolE2 (Staphylococcus epidermidis (strain ATCC 12228 / FDA PCI 1200)).